The primary structure comprises 542 residues: N-substituted formamide deformylase (542 aa).

Positions 1 to 2 (MT) are excised as a propeptide.

In terms of assembly, homodimer. Requires Zn(2+) as cofactor.

It catalyses the reaction N-benzylformamide + H2O = benzylamine + formate. With respect to regulation, completely inhibited by HgCl(2), CuCl, CuCl(2) and AgNO(3). Partially inhibited by ZnCl(2) and SnCl(2). Almost completely inhibited by the reducing reagent DTT. Partially inhibited by phenylhydrazine. Moderately inhibited by phenanthroline and 8-hydroxyquinoline. Completely inhibited by the thiol-specific inhibitors N-ethylmaleimide and p-chloromercuribenzoate. Not inhibited by the carbonyl-specific inhibitors aminoguanidine and semicarbazide, the chelating agents alpha,alpha'-dipyridyl, KCN, diethyldithiocarbamate and EDTA, or the oxidizing reagents and serine-modifying reagents such as H(2)O(2), ammonium persulfate, phenylmethanesulfonyl fluoride and diisopropyl fluorophosphates. Its function is as follows. Hydrolyzes N-substituted formamides, but not amides. N-benzylformamide is the preferred substrate, while N-butylformamide is hydrolyzed at a much lower rate. Has very low activity towards allylformamide, N-(2-cyclohex-1-enylethyl)formamide and N-(alpha-methylbenzyl)formamide. This Arthrobacter pascens protein is N-substituted formamide deformylase.